The sequence spans 201 residues: Dephospho-CoA kinase (201 aa).

The DPCK domain maps to 4-201 (VIGLTGGIAS…LLDTWSNIEK (198 aa)). 12 to 17 (ASGKST) contributes to the ATP binding site.

The protein belongs to the CoaE family.

The protein resides in the cytoplasm. It carries out the reaction 3'-dephospho-CoA + ATP = ADP + CoA + H(+). Its pathway is cofactor biosynthesis; coenzyme A biosynthesis; CoA from (R)-pantothenate: step 5/5. Functionally, catalyzes the phosphorylation of the 3'-hydroxyl group of dephosphocoenzyme A to form coenzyme A. In Bacillus licheniformis (strain ATCC 14580 / DSM 13 / JCM 2505 / CCUG 7422 / NBRC 12200 / NCIMB 9375 / NCTC 10341 / NRRL NRS-1264 / Gibson 46), this protein is Dephospho-CoA kinase.